Reading from the N-terminus, the 645-residue chain is 1-deoxy-D-xylulose-5-phosphate synthase 2 (645 aa).

Thiamine diphosphate contacts are provided by residues His-79 and 120 to 122 (GHS). Mg(2+) is bound at residue Asp-151. Thiamine diphosphate-binding positions include 152 to 153 (GS), Asn-180, Tyr-291, and Glu-373. Asn-180 contributes to the Mg(2+) binding site.

The protein belongs to the transketolase family. DXPS subfamily. In terms of assembly, homodimer. Mg(2+) is required as a cofactor. Requires thiamine diphosphate as cofactor.

The enzyme catalyses D-glyceraldehyde 3-phosphate + pyruvate + H(+) = 1-deoxy-D-xylulose 5-phosphate + CO2. The protein operates within metabolic intermediate biosynthesis; 1-deoxy-D-xylulose 5-phosphate biosynthesis; 1-deoxy-D-xylulose 5-phosphate from D-glyceraldehyde 3-phosphate and pyruvate: step 1/1. In terms of biological role, catalyzes the acyloin condensation reaction between C atoms 2 and 3 of pyruvate and glyceraldehyde 3-phosphate to yield 1-deoxy-D-xylulose-5-phosphate (DXP). This Rhodospirillum rubrum (strain ATCC 11170 / ATH 1.1.1 / DSM 467 / LMG 4362 / NCIMB 8255 / S1) protein is 1-deoxy-D-xylulose-5-phosphate synthase 2.